The sequence spans 678 residues: Exoribonuclease 2 (678 aa).

The 329-residue stretch at 193-521 (REDLTALPFV…INHRLLKAHI (329 aa)) folds into the RNB domain. The region spanning 568–650 (ETRFQAEIFD…ENRSLVGKPT (83 aa)) is the S1 motif domain. The interval 658-678 (SETQTSTEQPAEGAENNEPQA) is disordered.

The protein belongs to the RNR ribonuclease family. RNase II subfamily.

It localises to the cytoplasm. The catalysed reaction is Exonucleolytic cleavage in the 3'- to 5'-direction to yield nucleoside 5'-phosphates.. Functionally, involved in mRNA degradation. Hydrolyzes single-stranded polyribonucleotides processively in the 3' to 5' direction. The polypeptide is Exoribonuclease 2 (Vibrio cholerae serotype O1 (strain ATCC 39541 / Classical Ogawa 395 / O395)).